Consider the following 258-residue polypeptide: UPF0246 protein Bpro_3713 (258 aa).

This sequence belongs to the UPF0246 family.

The protein is UPF0246 protein Bpro_3713 of Polaromonas sp. (strain JS666 / ATCC BAA-500).